A 223-amino-acid polypeptide reads, in one-letter code: PKHD-type hydroxylase syc1482_d (223 aa).

The 99-residue stretch at 78–176 folds into the Fe2OG dioxygenase domain; the sequence is RVHSLLFSRY…RFACVGWVQS (99 aa). Positions 96, 98, and 157 each coordinate Fe cation. A 2-oxoglutarate-binding site is contributed by R167.

Requires Fe(2+) as cofactor. L-ascorbate serves as cofactor.

The protein is PKHD-type hydroxylase syc1482_d of Synechococcus sp. (strain ATCC 27144 / PCC 6301 / SAUG 1402/1) (Anacystis nidulans).